The following is a 161-amino-acid chain: Protein ZMO0507 (161 aa).

Belongs to the free Met sulfoxide reductase family.

The chain is Protein ZMO0507 from Zymomonas mobilis subsp. mobilis (strain ATCC 31821 / ZM4 / CP4).